We begin with the raw amino-acid sequence, 276 residues long: Rhomboid protease GlpG (276 aa).

Transmembrane regions (helical) follow at residues 94–114 (GPVTWVMMIACVVVFIAMQIL), 142–162 (ALMHFSLMHILFNLLWWWYLG), 169–189 (LGSGKLIVITLISALLSGYVQ), 192–212 (FSGPWFGGLSGVVYALMGYVW), 229–249 (LIIFALIWIVAGWFDLFGMSM), and 250–270 (ANGAHIAGLAVGLAMAFVDSL). The Nucleophile role is filled by serine 201. Histidine 254 is an active-site residue.

The protein belongs to the peptidase S54 family.

Its subcellular location is the cell inner membrane. It carries out the reaction Cleaves type-1 transmembrane domains using a catalytic dyad composed of serine and histidine that are contributed by different transmembrane domains.. In terms of biological role, rhomboid-type serine protease that catalyzes intramembrane proteolysis. The sequence is that of Rhomboid protease GlpG from Escherichia coli O7:K1 (strain IAI39 / ExPEC).